The following is a 230-amino-acid chain: Urease accessory protein UreF (230 aa).

Belongs to the UreF family. As to quaternary structure, ureD, UreF and UreG form a complex that acts as a GTP-hydrolysis-dependent molecular chaperone, activating the urease apoprotein by helping to assemble the nickel containing metallocenter of UreC. The UreE protein probably delivers the nickel.

It localises to the cytoplasm. In terms of biological role, required for maturation of urease via the functional incorporation of the urease nickel metallocenter. In Allorhizobium ampelinum (strain ATCC BAA-846 / DSM 112012 / S4) (Agrobacterium vitis (strain S4)), this protein is Urease accessory protein UreF.